The primary structure comprises 63 residues: Glutamine synthetase translation inhibitor (63 aa).

Its function is as follows. Inhibits the synthesis of glutamine synthetase II. This Rhizobium leguminosarum protein is Glutamine synthetase translation inhibitor (gstI).